Consider the following 138-residue polypeptide: Small ribosomal subunit protein uS11 (138 aa).

The segment covering methionine 1–lysine 12 has biased composition (low complexity). A disordered region spans residues methionine 1–glycine 28. Basic residues predominate over residues lysine 13–lysine 22.

The protein belongs to the universal ribosomal protein uS11 family. Part of the 30S ribosomal subunit. Interacts with proteins S7 and S18. Binds to IF-3.

Functionally, located on the platform of the 30S subunit, it bridges several disparate RNA helices of the 16S rRNA. Forms part of the Shine-Dalgarno cleft in the 70S ribosome. This chain is Small ribosomal subunit protein uS11, found in Mycobacterium sp. (strain JLS).